Consider the following 143-residue polypeptide: MELNTITPGQGAKHAKRRVGRGIGSGLGKTAGRGHKGQKSRSGGYHKVGFEGGQMPMQRRLPKRGFKSHLLKFNAEVTLTALEQLGLAEVDLLTLKQSGLVGQIAKNVKIINTGSLSLAVKLTGISATAGAKTIIEAAGGSIA.

Positions 1–59 (MELNTITPGQGAKHAKRRVGRGIGSGLGKTAGRGHKGQKSRSGGYHKVGFEGGQMPMQR) are disordered. Over residues 21 to 31 (RGIGSGLGKTA) the composition is skewed to gly residues.

It belongs to the universal ribosomal protein uL15 family. As to quaternary structure, part of the 50S ribosomal subunit.

Functionally, binds to the 23S rRNA. The protein is Large ribosomal subunit protein uL15 of Polaromonas naphthalenivorans (strain CJ2).